An 89-amino-acid chain; its full sequence is Small ribosomal subunit protein uS15 (89 aa).

It belongs to the universal ribosomal protein uS15 family. As to quaternary structure, part of the 30S ribosomal subunit. Forms a bridge to the 50S subunit in the 70S ribosome, contacting the 23S rRNA.

One of the primary rRNA binding proteins, it binds directly to 16S rRNA where it helps nucleate assembly of the platform of the 30S subunit by binding and bridging several RNA helices of the 16S rRNA. In terms of biological role, forms an intersubunit bridge (bridge B4) with the 23S rRNA of the 50S subunit in the ribosome. This Desulfatibacillum aliphaticivorans protein is Small ribosomal subunit protein uS15.